Here is a 95-residue protein sequence, read N- to C-terminus: Co-chaperonin GroES (95 aa).

This sequence belongs to the GroES chaperonin family. In terms of assembly, heptamer of 7 subunits arranged in a ring. Interacts with the chaperonin GroEL.

It localises to the cytoplasm. Functionally, together with the chaperonin GroEL, plays an essential role in assisting protein folding. The GroEL-GroES system forms a nano-cage that allows encapsulation of the non-native substrate proteins and provides a physical environment optimized to promote and accelerate protein folding. GroES binds to the apical surface of the GroEL ring, thereby capping the opening of the GroEL channel. The polypeptide is Co-chaperonin GroES (Zymomonas mobilis subsp. mobilis (strain ATCC 31821 / ZM4 / CP4)).